The sequence spans 316 residues: Methionyl-tRNA formyltransferase (316 aa).

111–114 is a (6S)-5,6,7,8-tetrahydrofolate binding site; sequence SLLP.

This sequence belongs to the Fmt family.

It carries out the reaction L-methionyl-tRNA(fMet) + (6R)-10-formyltetrahydrofolate = N-formyl-L-methionyl-tRNA(fMet) + (6S)-5,6,7,8-tetrahydrofolate + H(+). Functionally, attaches a formyl group to the free amino group of methionyl-tRNA(fMet). The formyl group appears to play a dual role in the initiator identity of N-formylmethionyl-tRNA by promoting its recognition by IF2 and preventing the misappropriation of this tRNA by the elongation apparatus. The chain is Methionyl-tRNA formyltransferase from Limosilactobacillus fermentum (strain NBRC 3956 / LMG 18251) (Lactobacillus fermentum).